We begin with the raw amino-acid sequence, 1503 residues long: Lysine-specific demethylase 5B-B (1503 aa).

One can recognise a JmjN domain in the interval 15-56 (CPVFEPSWEEFKDPFAFINKIRPIAEKTGICKVRPPPDWQPP). Positions 80-170 (TRVKLNFLDQ…ILYPYNLFQS (91 aa)) constitute an ARID domain. Residues 202 to 211 (VPLQPSNTSA) show a composition bias toward polar residues. 2 disordered regions span residues 202–223 (VPLQ…KTES) and 268–287 (IKEL…NIPP). The span at 268-278 (IKELNPEPEKS) shows a compositional bias: basic and acidic residues. Residues 295–345 (LYVCLVCGKGNDEDRLLLCDGCDDSYHTFCLIPPLTDVPKGDWRCPKCLTQ) form a PHD-type 1 zinc finger. In terms of domain architecture, JmjC spans 439–605 (KYLQCGWNLN…LGRQCVDHYR (167 aa)). Residues His485, Asp488, and His573 each coordinate Fe cation. A PHD-type 2 zinc finger spans residues 1168–1216 (LKVCVCQKPAMGAMLQCELCRDAFHSVCVRGPSDPLDPEAWLCPLCLRS). Disordered regions lie at residues 1362-1381 (TNTS…TETD) and 1403-1442 (ERGT…DSEE). Residues 1444–1497 (MTLCPAESCLQPEGEEVDWVQCDCCNRWFHMICVGVSAELAAEEDYMCVSCSTS) form a PHD-type 3 zinc finger.

Belongs to the JARID1 histone demethylase family. Fe(2+) is required as a cofactor.

It localises to the nucleus. It carries out the reaction N(6),N(6),N(6)-trimethyl-L-lysyl(4)-[histone H3] + 3 2-oxoglutarate + 3 O2 = L-lysyl(4)-[histone H3] + 3 formaldehyde + 3 succinate + 3 CO2. Functionally, histone demethylase that demethylates 'Lys-4' of histone H3, thereby playing a central role in histone code. Does not demethylate histone H3 'Lys-9' or H3 'Lys-27'. Demethylates trimethylated, dimethylated and monomethylated H3 'Lys-4'. Acts as a transcriptional corepressor. This Danio rerio (Zebrafish) protein is Lysine-specific demethylase 5B-B (kdm5bb).